We begin with the raw amino-acid sequence, 321 residues long: MSASAFVAVASCLAALVHGYANPGSCSGACNVHDPALIRRQSDGKYFRFSTGNKISYASSSSIQGPWTVLGSVLPSGSSINLDGKDDLWAPDVSLVNGVYHVYYSVSTFGSQSSAIGLATSSTMDLNSWTDHGSTGIQSSSSKPYNAIDANLFNDGGTYYMNFGSFWHDIYQAPMNSAATAAASSSYNIAYNPSGTHAVEGAFMYKYGSYYYLFFSAGICCGYDTSRPASGEEYKIKVCRSTSATGNFVDASGVACTNGGGTVVLESHGTVYGPGGQGVFTDPSLGPILYYHYVDTTIGYADGQKLFGWNKIDFSSGWPVV.

Residues 1-19 form the signal peptide; sequence MSASAFVAVASCLAALVHG. The active-site Proton acceptor is Asp34. The Proton donor role is filled by Glu200.

Belongs to the glycosyl hydrolase 43 family.

The protein resides in the secreted. It carries out the reaction Endohydrolysis of (1-&gt;5)-alpha-arabinofuranosidic linkages in (1-&gt;5)-arabinans.. It participates in glycan metabolism; L-arabinan degradation. Endo-1,5-alpha-L-arabinanase involved in degradation of pectin. Its preferred substrate is linear 1,5-alpha-L-arabinan. This Neosartorya fischeri (strain ATCC 1020 / DSM 3700 / CBS 544.65 / FGSC A1164 / JCM 1740 / NRRL 181 / WB 181) (Aspergillus fischerianus) protein is Probable arabinan endo-1,5-alpha-L-arabinosidase A (abnA).